We begin with the raw amino-acid sequence, 130 residues long: Small ribosomal subunit protein uS11 (130 aa).

This sequence belongs to the universal ribosomal protein uS11 family. Part of the 30S ribosomal subunit. Interacts with proteins S7 and S18. Binds to IF-3.

Its function is as follows. Located on the platform of the 30S subunit, it bridges several disparate RNA helices of the 16S rRNA. Forms part of the Shine-Dalgarno cleft in the 70S ribosome. This chain is Small ribosomal subunit protein uS11, found in Synechococcus sp. (strain WH7803).